Here is a 557-residue protein sequence, read N- to C-terminus: Dihydroxy-acid dehydratase (557 aa).

C50 lines the [2Fe-2S] cluster pocket. D82 provides a ligand contact to Mg(2+). C123 contributes to the [2Fe-2S] cluster binding site. Positions 124 and 125 each coordinate Mg(2+). K125 is subject to N6-carboxylysine. A [2Fe-2S] cluster-binding site is contributed by C195. Position 447 (E447) interacts with Mg(2+). The active-site Proton acceptor is the S473.

This sequence belongs to the IlvD/Edd family. As to quaternary structure, homodimer. Requires [2Fe-2S] cluster as cofactor. It depends on Mg(2+) as a cofactor.

It catalyses the reaction (2R)-2,3-dihydroxy-3-methylbutanoate = 3-methyl-2-oxobutanoate + H2O. The catalysed reaction is (2R,3R)-2,3-dihydroxy-3-methylpentanoate = (S)-3-methyl-2-oxopentanoate + H2O. It functions in the pathway amino-acid biosynthesis; L-isoleucine biosynthesis; L-isoleucine from 2-oxobutanoate: step 3/4. The protein operates within amino-acid biosynthesis; L-valine biosynthesis; L-valine from pyruvate: step 3/4. Functions in the biosynthesis of branched-chain amino acids. Catalyzes the dehydration of (2R,3R)-2,3-dihydroxy-3-methylpentanoate (2,3-dihydroxy-3-methylvalerate) into 2-oxo-3-methylpentanoate (2-oxo-3-methylvalerate) and of (2R)-2,3-dihydroxy-3-methylbutanoate (2,3-dihydroxyisovalerate) into 2-oxo-3-methylbutanoate (2-oxoisovalerate), the penultimate precursor to L-isoleucine and L-valine, respectively. The sequence is that of Dihydroxy-acid dehydratase from Burkholderia pseudomallei (strain 1710b).